Reading from the N-terminus, the 168-residue chain is Dihydrofolate reductase (168 aa).

The 164-residue stretch at 1 to 164 folds into the DHFR domain; sequence MIIGIWAEDE…YTFTIKKYEK (164 aa). Residue 5–7 coordinates substrate; the sequence is IWA. Residues 6–7 and 14–19 each bind NADP(+); these read WA and IGEADK. A substrate-binding site is contributed by E27. NADP(+) is bound at residue 43-46; the sequence is GRKT. R58 is a substrate binding site. NADP(+) is bound by residues 63–66 and 99–104; these read LTRD and TGGAEI. T118 contacts substrate.

The protein belongs to the dihydrofolate reductase family.

It catalyses the reaction (6S)-5,6,7,8-tetrahydrofolate + NADP(+) = 7,8-dihydrofolate + NADPH + H(+). The protein operates within cofactor biosynthesis; tetrahydrofolate biosynthesis; 5,6,7,8-tetrahydrofolate from 7,8-dihydrofolate: step 1/1. Its function is as follows. Key enzyme in folate metabolism. Catalyzes an essential reaction for de novo glycine and purine synthesis, and for DNA precursor synthesis. This is Dihydrofolate reductase (folA) from Lactococcus lactis subsp. lactis (strain IL1403) (Streptococcus lactis).